The sequence spans 241 residues: Cobalt transport protein CbiM (241 aa).

The N-terminal stretch at 1–23 (MKKNLTFFMVIALLFTITPNVYA) is a signal peptide. Helical transmembrane passes span 29–49 (GFLP…FIII), 66–86 (MLLG…IPSV), 98–118 (LSAI…VLIF), 121–141 (ILLA…MGIM), 160–180 (VAVF…TSVQ), and 202–222 (IFSI…VIIF).

Belongs to the CbiM family. Forms an energy-coupling factor (ECF) transporter complex composed of an ATP-binding protein (A component, CbiO), a transmembrane protein (T component, CbiQ) and 2 possible substrate-capture proteins (S components, CbiM and CbiN) of unknown stoichimetry.

The protein localises to the cell membrane. It participates in cofactor biosynthesis; adenosylcobalamin biosynthesis. Functionally, part of the energy-coupling factor (ECF) transporter complex CbiMNOQ involved in cobalt import. This Clostridium tetani (strain Massachusetts / E88) protein is Cobalt transport protein CbiM.